Consider the following 480-residue polypeptide: uncharacterized protein (480 aa).

The tract at residues 1 to 20 is disordered; that stretch reads MDVKDTGINRSDTPISDQDH.

This is an uncharacterized protein from Arabidopsis thaliana (Mouse-ear cress).